Here is a 114-residue protein sequence, read N- to C-terminus: INGDAKGTVFFEQETSEAPVKVTGEVLGLTKGLHGFHVHEFGNNTNGCMSSGPHFNPGNKEHGAPTDGNRHLGDLGNIQAAGDSPTAVSITDSKITLFGANSIIGRTVVVHADA.

3 residues coordinate Cu cation: His37, His39, and His54. Zn(2+)-binding residues include His54, His62, His71, and Asp74. The interval 54–80 is disordered; it reads HFNPGNKEHGAPTDGNRHLGDLGNIQA. Residues 59-73 show a composition bias toward basic and acidic residues; sequence NKEHGAPTDGNRHLG. A Cu cation-binding site is contributed by His111.

Belongs to the Cu-Zn superoxide dismutase family. In terms of assembly, homodimer. It depends on Cu cation as a cofactor. Requires Zn(2+) as cofactor.

Its subcellular location is the cytoplasm. It catalyses the reaction 2 superoxide + 2 H(+) = H2O2 + O2. Its function is as follows. Destroys radicals which are normally produced within the cells and which are toxic to biological systems. This chain is Superoxide dismutase [Cu-Zn], found in Drosophila tolteca (Fruit fly).